The sequence spans 359 residues: MPLSRLIVKQFRNIEACDIQPSSGFNFLIGANGSGKTSVLEAVYLLGHGRSFKSSLSGRIIQNECSELFVHGRFMTSDQFELPIGINKQRDGTTEVKISGQTGQKLAQLAQVLPLQLIHPEGFDLLTDGPKHRRAFIDWGVFHSESGFYDAWGRVKRLNKQRNALLKTATHYRELSYWDQELARLAESISQWRATYVEQLKEVAEEICATFLPEFEIKINYYRGWDKDTPYAEILEKNFERDQQLGYTFSGPNKADLKIKVNGTPVEDVLSRGQLKLMVCALRVAQGQHLTQMTGKQCIYLIDDFASELDSQRRARLAECLKATQAQVFVSSITADQIADMHDENSRMFHVEHGKIEQG.

Residue 30–37 (GANGSGKT) participates in ATP binding.

Belongs to the RecF family.

It is found in the cytoplasm. In terms of biological role, the RecF protein is involved in DNA metabolism; it is required for DNA replication and normal SOS inducibility. RecF binds preferentially to single-stranded, linear DNA. It also seems to bind ATP. This Vibrio atlanticus (strain LGP32) (Vibrio splendidus (strain Mel32)) protein is DNA replication and repair protein RecF.